The following is a 1191-amino-acid chain: Zinc finger protein ush (1191 aa).

Disordered stretches follow at residues 1-153 and 169-194; these read MLSS…PKYP and PDAK…DTQA. A compositionally biased stretch (basic and acidic residues) spans 19-28; sequence VDSRDSKDLS. The span at 61 to 73 shows a compositional bias: acidic residues; it reads IDDDADEDAEFEE. 2 positions are modified to phosphoserine: Ser116 and Ser118. Residues 130–151 are compositionally biased toward pro residues; that stretch reads ATPPSEPEASPCPSPSPCPTPK. Residues 202 to 235 form a CCHC FOG-type 1 zinc finger; the sequence is LLKPARFMCLPCGIAFSSPSTLEAHQAYYCSHRI. Zn(2+)-binding residues include Cys210, Cys213, His226, and Cys231. The segment at 239 to 274 is disordered; it reads DEAGSDKSGAGGSGATAGDAAGLTGGSTEPPAKMAR. Low complexity predominate over residues 254-266; that stretch reads TAGDAAGLTGGST. A C2H2-type 1 zinc finger spans residues 279-301; sequence YGCTQCSYSADKKVSLNRHMRMH. The tract at residues 304 to 338 is disordered; the sequence is SPAAPTLAGLPSLLQNGIAPPGVTPNPMEDSSSQQ. The segment at 335–368 adopts a CCHC FOG-type 2 zinc-finger fold; it reads SSQQTDRYCSHCDIRFNNIKTYRAHKQHYCSSRR. Positions 343, 346, 359, and 364 each coordinate Zn(2+). 3 disordered regions span residues 361–413, 504–540, and 601–635; these read QHYC…ARNK, EPER…ESAP, and APSL…MSPP. Residues 383–394 show a composition bias toward gly residues; it reads AGSGPGSAGGSI. Low complexity-rich tracts occupy residues 509 to 523, 602 to 613, and 620 to 635; these read SAPS…AKSS, PSLPSSPSMSPS, and SPRS…MSPP. CCHC FOG-type zinc fingers lie at residues 720–753 and 791–824; these read YVKK…SARS and PVAY…PKGG. The Zn(2+) site is built by Cys728, Cys731, His744, Cys749, Cys799, Cys802, His815, and Cys820. C2H2-type zinc fingers lie at residues 882-907, 910-932, and 983-1006; these read NKCP…HGTV, YRCS…IRTH, and FNCD…KLMH. The disordered stretch occupies residues 1011 to 1073; it reads INSPSISPDT…HENNNSPIAT (63 aa). Phosphoserine occurs at positions 1013, 1015, and 1017. Residues 1025-1040 are compositionally biased toward polar residues; it reads VTSNPTTNQHSNSDVS. The CCHC FOG-type 5 zinc-finger motif lies at 1113 to 1146; sequence AAEVMKKYCSTCDISFNYVKTYLAHKQFYCKNKP. Zn(2+) contacts are provided by Cys1121, Cys1124, His1137, and Cys1142. Ser1156 carries the phosphoserine modification.

Belongs to the FOG (Friend of GATA) family. Interacts with pnr, although weak this interaction is essential. Interacts with the isoform SrpNC of srp. Interacts with CtBP corepressor. As to expression, first expressed in stage 5 at high levels in the primordium of the amnioserosa. Also expressed in germ band extending embryos in cells of the developing anterior and posterior midgut and in hemocyte precursors present in the cephalic mesoderm. In embryonic stage 8, it is expressed in blood cell precursors. By stage 10, it is expressed in hemocyte precursors that have spread throughout the lateral and ventral head mesoderm. By stage 11, it is expressed in the dorsal ectoderm and in precursor cells of the hemocytes and fat body. As embryogenesis proceeds, it is also expressed in stage 13 plasmatocytes migrating throughout the head mesoderm and down the ventral midline. By late embryogenesis, expression strongly decreases but remains in the dorsal ectoderm during dorsal closure, in cells within, or associated with, the central nervous system, and in plasmatocytes circulating throughout the embryonic hemolymph. During larval development, it is expressed in primary and secondary lobes of lymph glands. Expressed in the dorsal part of the thoracic imaginal disk.

Its subcellular location is the nucleus. Its function is as follows. Transcription regulator that modulates expression mediated by transcription factors of the GATA family such as pnr and srp. Represses transcription of proneural achaete-scute complex (AS-C), which is usually activated by pnr. Involved in cardiogenesis, blood, and eye development. During hematopoiesis, it is required to restrict the number of crystal cells, probably via its interaction with the isoform SrpNC of srp. Negatively regulates expression of sr. Probably acts by interacting with the GATA-type zinc finger of proteins such as pnr and srp, possibly antagonizing the interaction between the GATA-type zinc finger and some cofactor. This Drosophila melanogaster (Fruit fly) protein is Zinc finger protein ush (ush).